A 475-amino-acid polypeptide reads, in one-letter code: tRNA-2-methylthio-N(6)-dimethylallyladenosine synthase (475 aa).

Positions 7–127 (RKLHIKSYGC…LPKLLAKARD (121 aa)) constitute an MTTase N-terminal domain. Positions 16, 52, 90, 168, 172, and 175 each coordinate [4Fe-4S] cluster. One can recognise a Radical SAM core domain in the interval 154-388 (RARGVSAFVT…AQLQALIDAQ (235 aa)). Residues 394 to 456 (RAAIGRTVEV…RYSLKGRLAS (63 aa)) enclose the TRAM domain.

Belongs to the methylthiotransferase family. MiaB subfamily. In terms of assembly, monomer. [4Fe-4S] cluster is required as a cofactor.

It is found in the cytoplasm. The catalysed reaction is N(6)-dimethylallyladenosine(37) in tRNA + (sulfur carrier)-SH + AH2 + 2 S-adenosyl-L-methionine = 2-methylsulfanyl-N(6)-dimethylallyladenosine(37) in tRNA + (sulfur carrier)-H + 5'-deoxyadenosine + L-methionine + A + S-adenosyl-L-homocysteine + 2 H(+). Catalyzes the methylthiolation of N6-(dimethylallyl)adenosine (i(6)A), leading to the formation of 2-methylthio-N6-(dimethylallyl)adenosine (ms(2)i(6)A) at position 37 in tRNAs that read codons beginning with uridine. This Afipia carboxidovorans (strain ATCC 49405 / DSM 1227 / KCTC 32145 / OM5) (Oligotropha carboxidovorans) protein is tRNA-2-methylthio-N(6)-dimethylallyladenosine synthase.